Here is a 457-residue protein sequence, read N- to C-terminus: tRNA-2-methylthio-N(6)-dimethylallyladenosine synthase (457 aa).

Positions 3–120 (KKVYVKTFGC…LPQMIDKRRE (118 aa)) constitute an MTTase N-terminal domain. 6 residues coordinate [4Fe-4S] cluster: C12, C49, C83, C157, C161, and C164. The Radical SAM core domain maps to 143–377 (RVDGPSAFVS…QATIEENVQR (235 aa)). The 68-residue stretch at 380–447 (DSMVGKIERI…PHSLRGELVL (68 aa)) folds into the TRAM domain.

This sequence belongs to the methylthiotransferase family. MiaB subfamily. As to quaternary structure, monomer. [4Fe-4S] cluster serves as cofactor.

It localises to the cytoplasm. It catalyses the reaction N(6)-dimethylallyladenosine(37) in tRNA + (sulfur carrier)-SH + AH2 + 2 S-adenosyl-L-methionine = 2-methylsulfanyl-N(6)-dimethylallyladenosine(37) in tRNA + (sulfur carrier)-H + 5'-deoxyadenosine + L-methionine + A + S-adenosyl-L-homocysteine + 2 H(+). In terms of biological role, catalyzes the methylthiolation of N6-(dimethylallyl)adenosine (i(6)A), leading to the formation of 2-methylthio-N6-(dimethylallyl)adenosine (ms(2)i(6)A) at position 37 in tRNAs that read codons beginning with uridine. In Paraburkholderia phytofirmans (strain DSM 17436 / LMG 22146 / PsJN) (Burkholderia phytofirmans), this protein is tRNA-2-methylthio-N(6)-dimethylallyladenosine synthase.